Consider the following 412-residue polypeptide: Probable serine/threonine-protein kinase PBL10 (412 aa).

A lipid anchor (N-myristoyl glycine) is attached at glycine 2. A lipid anchor (S-palmitoyl cysteine) is attached at cysteine 4. Residues 15 to 45 (GASPKYMSSEANDSLGSKSSSVSIRTNPRTE) form a disordered region. A compositionally biased stretch (polar residues) spans 23–43 (SEANDSLGSKSSSVSIRTNPR). The residue at position 58 (threonine 58) is a Phosphothreonine. The Protein kinase domain occupies 69–356 (FRPDSVLGEG…VVSHLEHIQT (288 aa)). Residues 75–83 (LGEGGFGSV) and lysine 107 contribute to the ATP site. At tyrosine 152 the chain carries Phosphotyrosine. Aspartate 204 functions as the Proton acceptor in the catalytic mechanism. Residues serine 208 and serine 238 each carry the phosphoserine modification. Threonine 239 and threonine 244 each carry phosphothreonine. Phosphotyrosine is present on tyrosine 252.

This sequence belongs to the protein kinase superfamily. Ser/Thr protein kinase family. As to quaternary structure, interacts with the Xanthomonas campestris effector XopAC/AvrAC. Expressed in stomatal guard cells of leaves.

The protein resides in the cell membrane. It carries out the reaction L-seryl-[protein] + ATP = O-phospho-L-seryl-[protein] + ADP + H(+). The catalysed reaction is L-threonyl-[protein] + ATP = O-phospho-L-threonyl-[protein] + ADP + H(+). Functionally, possible bi-functional kinase. In vitro, it exhibits serine/threonine activity. In vivo, can phosphorylate tyrosine residues of limited substrates. May be involved in plant defense signaling. Required for full light-induced stomatal opening. The chain is Probable serine/threonine-protein kinase PBL10 from Arabidopsis thaliana (Mouse-ear cress).